Here is a 730-residue protein sequence, read N- to C-terminus: Ribosomal RNA large subunit methyltransferase K/L (730 aa).

Residues 46–157 (TAYRLCVWSR…RGEAILSLDL (112 aa)) form the THUMP domain. The interval 394 to 418 (GERREAQPEGTEARQQVPQASEPAR) is disordered.

The protein belongs to the methyltransferase superfamily. RlmKL family.

It localises to the cytoplasm. The catalysed reaction is guanosine(2445) in 23S rRNA + S-adenosyl-L-methionine = N(2)-methylguanosine(2445) in 23S rRNA + S-adenosyl-L-homocysteine + H(+). It catalyses the reaction guanosine(2069) in 23S rRNA + S-adenosyl-L-methionine = N(2)-methylguanosine(2069) in 23S rRNA + S-adenosyl-L-homocysteine + H(+). Its function is as follows. Specifically methylates the guanine in position 2445 (m2G2445) and the guanine in position 2069 (m7G2069) of 23S rRNA. The polypeptide is Ribosomal RNA large subunit methyltransferase K/L (Pseudomonas putida (strain ATCC 47054 / DSM 6125 / CFBP 8728 / NCIMB 11950 / KT2440)).